The following is a 447-amino-acid chain: Probable glycine dehydrogenase (decarboxylating) subunit 1 (447 aa).

It belongs to the GcvP family. N-terminal subunit subfamily. As to quaternary structure, the glycine cleavage system is composed of four proteins: P, T, L and H. In this organism, the P 'protein' is a heterodimer of two subunits.

It catalyses the reaction N(6)-[(R)-lipoyl]-L-lysyl-[glycine-cleavage complex H protein] + glycine + H(+) = N(6)-[(R)-S(8)-aminomethyldihydrolipoyl]-L-lysyl-[glycine-cleavage complex H protein] + CO2. The glycine cleavage system catalyzes the degradation of glycine. The P protein binds the alpha-amino group of glycine through its pyridoxal phosphate cofactor; CO(2) is released and the remaining methylamine moiety is then transferred to the lipoamide cofactor of the H protein. The chain is Probable glycine dehydrogenase (decarboxylating) subunit 1 from Bacillus thuringiensis subsp. konkukian (strain 97-27).